Reading from the N-terminus, the 236-residue chain is Phosphoglycolate phosphatase (236 aa).

The active-site Nucleophile is the D23. Mg(2+)-binding residues include D23 and D25. K162 serves as a coordination point for substrate. Mg(2+)-binding residues include D185 and D189.

The protein belongs to the archaeal SPP-like hydrolase family. It depends on Mg(2+) as a cofactor.

It carries out the reaction 2-phosphoglycolate + H2O = glycolate + phosphate. Functionally, catalyzes the dephosphorylation of 2-phosphoglycolate. This is Phosphoglycolate phosphatase from Picrophilus torridus (strain ATCC 700027 / DSM 9790 / JCM 10055 / NBRC 100828 / KAW 2/3).